Here is a 206-residue protein sequence, read N- to C-terminus: dTTP/UTP pyrophosphatase (206 aa).

D79 functions as the Proton acceptor in the catalytic mechanism.

Belongs to the Maf family. YhdE subfamily. Requires a divalent metal cation as cofactor.

The protein localises to the cytoplasm. It carries out the reaction dTTP + H2O = dTMP + diphosphate + H(+). It catalyses the reaction UTP + H2O = UMP + diphosphate + H(+). Functionally, nucleoside triphosphate pyrophosphatase that hydrolyzes dTTP and UTP. May have a dual role in cell division arrest and in preventing the incorporation of modified nucleotides into cellular nucleic acids. This Rhizobium etli (strain ATCC 51251 / DSM 11541 / JCM 21823 / NBRC 15573 / CFN 42) protein is dTTP/UTP pyrophosphatase.